Consider the following 297-residue polypeptide: Formamidopyrimidine-DNA glycosylase (297 aa).

The active-site Schiff-base intermediate with DNA is proline 2. Residue glutamate 3 is the Proton donor of the active site. Lysine 58 (proton donor; for beta-elimination activity) is an active-site residue. Residues histidine 106, arginine 125, and arginine 168 each coordinate DNA. The FPG-type zinc-finger motif lies at 259–295 (RVYDREGLACTARGCRGRVRRIVQAGRSTFYCETCQP). Arginine 285 acts as the Proton donor; for delta-elimination activity in catalysis.

It belongs to the FPG family. Monomer. Zn(2+) serves as cofactor.

It carries out the reaction Hydrolysis of DNA containing ring-opened 7-methylguanine residues, releasing 2,6-diamino-4-hydroxy-5-(N-methyl)formamidopyrimidine.. It catalyses the reaction 2'-deoxyribonucleotide-(2'-deoxyribose 5'-phosphate)-2'-deoxyribonucleotide-DNA = a 3'-end 2'-deoxyribonucleotide-(2,3-dehydro-2,3-deoxyribose 5'-phosphate)-DNA + a 5'-end 5'-phospho-2'-deoxyribonucleoside-DNA + H(+). Functionally, involved in base excision repair of DNA damaged by oxidation or by mutagenic agents. Acts as a DNA glycosylase that recognizes and removes damaged bases. Has a preference for oxidized purines, such as 7,8-dihydro-8-oxoguanine (8-oxoG). Has AP (apurinic/apyrimidinic) lyase activity and introduces nicks in the DNA strand. Cleaves the DNA backbone by beta-delta elimination to generate a single-strand break at the site of the removed base with both 3'- and 5'-phosphates. This is Formamidopyrimidine-DNA glycosylase from Methylobacterium sp. (strain 4-46).